Consider the following 256-residue polypeptide: 5-keto-4-deoxy-D-glucarate aldolase (256 aa).

His50 serves as the catalytic Proton acceptor. Substrate is bound at residue Gln151. Glu153 lines the Mg(2+) pocket. Substrate contacts are provided by Ser178 and Asp179. Asp179 lines the Mg(2+) pocket.

This sequence belongs to the HpcH/HpaI aldolase family. KDGluc aldolase subfamily. In terms of assembly, homohexamer; trimer of dimers. It depends on Mg(2+) as a cofactor.

The catalysed reaction is 5-dehydro-4-deoxy-D-glucarate = 2-hydroxy-3-oxopropanoate + pyruvate. It catalyses the reaction 2-dehydro-3-deoxy-D-glucarate = 2-hydroxy-3-oxopropanoate + pyruvate. It participates in carbohydrate acid metabolism; galactarate degradation; D-glycerate from galactarate: step 2/3. Its function is as follows. Catalyzes the reversible retro-aldol cleavage of both 5-keto-4-deoxy-D-glucarate and 2-keto-3-deoxy-D-glucarate to pyruvate and tartronic semialdehyde. In Escherichia coli O6:H1 (strain CFT073 / ATCC 700928 / UPEC), this protein is 5-keto-4-deoxy-D-glucarate aldolase.